A 135-amino-acid chain; its full sequence is HTH-type transcriptional regulator DicA (135 aa).

One can recognise an HTH cro/C1-type domain in the interval 12-66; that stretch reads IRYRRKNLKHTQRSLAKALKISHVSVSQWERGDSEPTGKNLFALSKVLQCSPTWI. The segment at residues 23–42 is a DNA-binding region (H-T-H motif); the sequence is QRSLAKALKISHVSVSQWER.

Functionally, this protein is a repressor of division inhibition gene dicB. The chain is HTH-type transcriptional regulator DicA (dicA) from Escherichia coli (strain K12).